A 550-amino-acid chain; its full sequence is Pectinesterase 2.1 (550 aa).

The N-linked (GlcNAc...) asparagine glycan is linked to N179. Substrate contacts are provided by T312 and Q342. C331 and C358 are oxidised to a cystine. The Proton donor role is filled by D365. Catalysis depends on D386, which acts as the Nucleophile. C399 and C433 are joined by a disulfide. R454 and W456 together coordinate substrate.

It in the N-terminal section; belongs to the PMEI family. In the C-terminal section; belongs to the pectinesterase family.

It localises to the secreted. The protein resides in the cell wall. The catalysed reaction is [(1-&gt;4)-alpha-D-galacturonosyl methyl ester](n) + n H2O = [(1-&gt;4)-alpha-D-galacturonosyl](n) + n methanol + n H(+). Its pathway is glycan metabolism; pectin degradation; 2-dehydro-3-deoxy-D-gluconate from pectin: step 1/5. Pectinesterase may play a role in cell wall metabolism during fruit growth and development prior to ripening and may be required for preparing cell walls for softening by polygalacturonase during fruit ripening. This chain is Pectinesterase 2.1 (PME2.1), found in Solanum lycopersicum (Tomato).